The primary structure comprises 419 residues: Phosphoribosylamine--glycine ligase (419 aa).

The ATP-grasp domain occupies 109-311 (KQLLIEAGVP…LEKVLMACVE (203 aa)). 135–191 (ATKMGAPIVVKADGLAAGKGVIVAQTSAEATTAIAELFDQGFEKIVVEEFLPGEEVS) provides a ligand contact to ATP. Mg(2+) contacts are provided by E281 and N283.

The protein belongs to the GARS family. The cofactor is Mg(2+). Mn(2+) serves as cofactor.

It carries out the reaction 5-phospho-beta-D-ribosylamine + glycine + ATP = N(1)-(5-phospho-beta-D-ribosyl)glycinamide + ADP + phosphate + H(+). It participates in purine metabolism; IMP biosynthesis via de novo pathway; N(1)-(5-phospho-D-ribosyl)glycinamide from 5-phospho-alpha-D-ribose 1-diphosphate: step 2/2. The chain is Phosphoribosylamine--glycine ligase from Synechocystis sp. (strain ATCC 27184 / PCC 6803 / Kazusa).